The chain runs to 546 residues: Chaperonin GroEL (546 aa).

ATP contacts are provided by residues 29–32 (TLGP), Lys50, 86–90 (DGTTT), Gly414, 477–479 (NAL), and Asp493.

It belongs to the chaperonin (HSP60) family. As to quaternary structure, forms a cylinder of 14 subunits composed of two heptameric rings stacked back-to-back. Interacts with the co-chaperonin GroES.

The protein resides in the cytoplasm. The enzyme catalyses ATP + H2O + a folded polypeptide = ADP + phosphate + an unfolded polypeptide.. In terms of biological role, together with its co-chaperonin GroES, plays an essential role in assisting protein folding. The GroEL-GroES system forms a nano-cage that allows encapsulation of the non-native substrate proteins and provides a physical environment optimized to promote and accelerate protein folding. This Leptospira interrogans serogroup Icterohaemorrhagiae serovar copenhageni (strain Fiocruz L1-130) protein is Chaperonin GroEL.